We begin with the raw amino-acid sequence, 393 residues long: Chorismate synthase (393 aa).

Residues R40 and R46 each coordinate NADP(+). Residues 129–131 (RSS), 249–250 (QA), G301, 316–320 (KPIPT), and R342 each bind FMN.

Belongs to the chorismate synthase family. In terms of assembly, homotetramer. It depends on FMNH2 as a cofactor.

It carries out the reaction 5-O-(1-carboxyvinyl)-3-phosphoshikimate = chorismate + phosphate. The protein operates within metabolic intermediate biosynthesis; chorismate biosynthesis; chorismate from D-erythrose 4-phosphate and phosphoenolpyruvate: step 7/7. Its function is as follows. Catalyzes the anti-1,4-elimination of the C-3 phosphate and the C-6 proR hydrogen from 5-enolpyruvylshikimate-3-phosphate (EPSP) to yield chorismate, which is the branch point compound that serves as the starting substrate for the three terminal pathways of aromatic amino acid biosynthesis. This reaction introduces a second double bond into the aromatic ring system. This chain is Chorismate synthase, found in Geotalea uraniireducens (strain Rf4) (Geobacter uraniireducens).